A 430-amino-acid chain; its full sequence is ATP-dependent protease ATPase subunit HslU (430 aa).

ATP-binding positions include V18, 60–65 (GVGKTE), D243, E308, and R380.

The protein belongs to the ClpX chaperone family. HslU subfamily. A double ring-shaped homohexamer of HslV is capped on each side by a ring-shaped HslU homohexamer. The assembly of the HslU/HslV complex is dependent on binding of ATP.

Its subcellular location is the cytoplasm. Functionally, ATPase subunit of a proteasome-like degradation complex; this subunit has chaperone activity. The binding of ATP and its subsequent hydrolysis by HslU are essential for unfolding of protein substrates subsequently hydrolyzed by HslV. HslU recognizes the N-terminal part of its protein substrates and unfolds these before they are guided to HslV for hydrolysis. This chain is ATP-dependent protease ATPase subunit HslU, found in Caulobacter vibrioides (strain ATCC 19089 / CIP 103742 / CB 15) (Caulobacter crescentus).